Here is a 417-residue protein sequence, read N- to C-terminus: Squamosa promoter-binding-like protein 14 (417 aa).

2 stretches are compositionally biased toward gly residues: residues 1-26 (MEMA…GGGG) and 51-60 (AGGGGTGSGS). Disordered regions lie at residues 1–32 (MEMA…EHRQ) and 51–102 (AGGG…PPPP). The segment covering 61-74 (GSASAAPPSSSSKA) has biased composition (low complexity). Residues 75–84 (AGGGRGGGGK) show a composition bias toward gly residues. Residues 101–178 (PPRCQVEGCG…AGHNERRRRP (78 aa)) form an SBP-type zinc finger. Positions 104, 109, 126, 129, 145, 148, and 152 each coordinate Zn(2+). Residues 161-177 (KRSCRRRLAGHNERRRR) carry the Bipartite nuclear localization signal motif. S163 carries the post-translational modification Phosphoserine. Residue C164 participates in Zn(2+) binding. A disordered region spans residues 387–417 (LQGNGPAPAPRIDPGSGSTFDQTSNTMDWSL). Residues 402–417 (SGSTFDQTSNTMDWSL) show a composition bias toward polar residues.

In terms of assembly, interacts with PCF1 and PCF2. Interacts with IPI1. Interacts with D53. Interacts with SLR1. Interacts (via C-terminus) with SHI1. Phosphorylated at Ser-163 in response to infection by the fungal pathogen Magnaporthe oryzae. Post-translationally, ubiquitinated by IPI1, which leads to proteasomal degradation. As to expression, expressed in young panicles. Expressed in the shoot apex at both the vegetative and reproductive stages. Highly expressed in the promordia of primary and secondary branches. Highly expressed in young panicles.

It localises to the nucleus. Functionally, transcriptional activator that binds to the SBP-box DNA core binding motif 5'-GTAC-3'. Can target the TCP motif 5'-TGGGCC/T-3' through interaction with PCF1 and PCF2. Key regulator of the plant architecture that controls shoot branching and panicle development. Promotes panicle branching. Promotes high grain yield. Binds to the promoters of TB1 and DEP1. Suppresses rice tillering mainly through positive regulation of TB1. Regulates plant height and panicle length through positive regulation of DEP1. Repressed by D53 in strigolactone (SL) signaling. Acts with D53 to mediate the SL-regulated tiller development. Functions as a direct downstream component of D53 in regulating tiller number and SL-induced gene expression. Binds directly to the D53 promoter and plays a critical role in the negative feedback regulation of SL-induced D53 expression. Involved in defense response against pathogens. Phosphorylated at Ser-163 in response to infection by the fungal pathogen Magnaporthe oryzae. Phosphorylation reduces SPL14/IPA1 binding to the GTAC site in the DEP1 promoter and enhances binding to the TGGGCC site in the WRKY45 promoter. Binding to the promoter of the pathogen defense gene WRKY45 activates its expression, leading to enhanced disease resistance. Reduces gibberellin-mediated disease susceptibility by stabilizing SLR1. Possesses transactivation activity in yeast cells. This chain is Squamosa promoter-binding-like protein 14, found in Oryza sativa subsp. japonica (Rice).